A 1088-amino-acid chain; its full sequence is Pathogenesis-related homeodomain protein (1088 aa).

8 repeat units span residues 140-152 (INMGQKETMPEEV), 173-199 (NSYQSGLPPENAVTDCKQVQLGHRSDD), 205-239 (GLVELVIGQKNVAKSPSQLVETGKRGRGRPRKVQT), 240-274 (GLEQLVIGQKTAAKSSSQLGDTGKRSRGRPRKVQN), 283-295 (INMEQKETIPEQV), 316-342 (NSDQSELPPENAAKNCNHAQFGHQSDD), 348-382 (GFKELVIGQETVAKSPSQLVDAGKRGRGRPRKVQT), and 383-417 (GLEQLVPVQETAAKSSSQLGDTGKRSRGRPRKVQD). Positions 140-295 (INMGQKETMP…EQKETIPEQV (156 aa)) are 2 X 13 AA repeats. The 2 X 27 AA approximate repeats stretch occupies residues 173–342 (NSYQSGLPPE…HAQFGHQSDD (170 aa)). The 2 X 35 AA approximate tandem repeats (type C) stretch occupies residues 205–274 (GLVELVIGQK…SRGRPRKVQN (70 aa)). The segment at 220 to 282 (PSQLVETGKR…QNSPTSFLEN (63 aa)) is disordered. 2 consecutive DNA-binding regions (a.T hook) follow at residues 226–236 (TGKRGRGRPRK) and 261–271 (TGKRSRGRPRK). The span at 272–282 (VQNSPTSFLEN) shows a compositional bias: polar residues. Positions 303–320 (SLTIPTDNQSRTYNSDQS) are enriched in polar residues. Disordered regions lie at residues 303–343 (SLTI…SDDT) and 363–484 (PSQL…RMEE). The tract at residues 348–417 (GFKELVIGQE…SRGRPRKVQD (70 aa)) is 2 X 35 AA approximate tandem repeats (type C). DNA-binding regions (a.T hook) lie at residues 369–379 (AGKRGRGRPRK) and 404–414 (TGKRSRGRPRK). The segment at 578 to 635 (DIFCAKCGSKDVTLSNDIILCDGACDRGFHQFCLDPPLLKEYIPPDDEGWLCPGCECK) adopts a PHD-type zinc-finger fold. 2 disordered regions span residues 667–810 (AASG…PLYP) and 851–901 (EEYG…ARES). The stretch at 678 to 693 (GLPSDDSEDDDYDPGG) is one 4-1 repeat. Positions 678 to 744 (GLPSDDSEDD…SEDDEYDPSG (67 aa)) are 2 X 16 AA Asp/Glu-rich (acidic) repeats. The segment covering 705-718 (SSTDESDYQSESDD) has biased composition (acidic residues). The 4-2 repeat unit spans residues 729–744 (GLPSDDSEDDEYDPSG). Composition is skewed to basic and acidic residues over residues 788-802 (DHVRNNEEGCGHPEQ) and 874-901 (NNSDKEATAMERGRESGDLELDQKARES). The segment at residues 935 to 994 (KSTSKTLHGEHATQRLLQSFKENQYPQRAVKESLAAELALSVRQVSNWFNNRRWSFRHSS) is a DNA-binding region (homeobox).

The protein belongs to the PHD-associated homeobox family.

The protein resides in the nucleus. Functionally, specifically binds to the fungal elicitor-responsive DNA element, 5'-CTAATTGTTTA-3', of the gene PR2 promoter. The sequence is that of Pathogenesis-related homeodomain protein (PRH) from Petroselinum crispum (Parsley).